The following is a 309-amino-acid chain: Glutaminase (309 aa).

Substrate is bound by residues Ser-64, Asn-114, Glu-160, Asn-167, Tyr-191, Tyr-243, and Val-261.

This sequence belongs to the glutaminase family. In terms of assembly, homotetramer.

It carries out the reaction L-glutamine + H2O = L-glutamate + NH4(+). The protein is Glutaminase of Rhizobium rhizogenes (strain K84 / ATCC BAA-868) (Agrobacterium radiobacter).